A 472-amino-acid chain; its full sequence is Sarcalumenin (472 aa).

A signal peptide spans 1–19 (MRALLLFCFVASLLLSGQA). The 242-residue stretch at 89–330 (ITSKPMVLFL…IENRLENKIA (242 aa)) folds into the Dynamin-type G domain. The interval 99–106 (GPWSVGKS) is G1 motif. Serine 102 is a glycosylation site (N-linked (GlcNAc...) asparagine). Residues 127 to 128 (EP) form a G2 motif region. The tract at residues 189 to 192 (DTPG) is G3 motif. The tract at residues 254–257 (NKAD) is G4 motif. Proline 277 is a region of interest (G5 motif). Asparagine 280 and asparagine 388 each carry an N-linked (GlcNAc...) asparagine glycan.

Belongs to the TRAFAC class dynamin-like GTPase superfamily. Dynamin/Fzo/YdjA family. In terms of processing, N-glycosylated. As to expression, detected in skeletal muscle.

It is found in the sarcoplasmic reticulum lumen. Its subcellular location is the sarcoplasmic reticulum membrane. This is Sarcalumenin (SRL) from Oryctolagus cuniculus (Rabbit).